A 388-amino-acid chain; its full sequence is Galactokinase (388 aa).

33-36 (EHTD) is a substrate binding site. ATP is bound by residues S67 and 124 to 130 (GAGLSSS). The Mg(2+) site is built by S130 and E162. D174 (proton acceptor) is an active-site residue. Residue Y224 participates in substrate binding.

The protein belongs to the GHMP kinase family. GalK subfamily.

It is found in the cytoplasm. The catalysed reaction is alpha-D-galactose + ATP = alpha-D-galactose 1-phosphate + ADP + H(+). Its pathway is carbohydrate metabolism; galactose metabolism. In terms of biological role, catalyzes the transfer of the gamma-phosphate of ATP to D-galactose to form alpha-D-galactose-1-phosphate (Gal-1-P). The chain is Galactokinase from Lacticaseibacillus paracasei (strain ATCC 334 / BCRC 17002 / CCUG 31169 / CIP 107868 / KCTC 3260 / NRRL B-441) (Lactobacillus paracasei).